A 376-amino-acid chain; its full sequence is MRTFGEARSIDINNDLERGYEAALLIQTLELEYYGDRPIRPNLQLSVPRSLQSTILRKFHTAVNICRLTFEAIKPNISQLDSQEYRKFQLIETIVNRYAPKRSSRSTSMSRAPDPLPRSLLGLVDKVRRQLDPTSEATLVAGFRRRRDSTLISLKIILLLILVPLLVQQMSRTYLITPAIDYLAPDLPFLSYPKPQLEEQAVEKLRVFKAEIEFDALLKGDSIPSQDELQKALVIKANQLKDEADKESTHAVKNVLADIAALIAFAFVCIINREELRVLRGFLDEAVYGLSDSAKAFAIILFTDMFVGFHSPEGWQVLLQGIANHFGFPARENFILLFIATFPVILATIFKYWIFRYLNRVSPSSVATLRGMNGSS.

The next 4 membrane-spanning stretches (helical) occupy residues threonine 150–methionine 170, alanine 251–isoleucine 271, isoleucine 299–leucine 319, and phenylalanine 334–isoleucine 354.

This sequence belongs to the CemA family.

It localises to the cell inner membrane. In terms of biological role, required for H(+) efflux immediately after light irradiation to form a rapid H(+) concentration gradient across the thylakoid membranes. Together with PxcL, contributes to transient H(+) uptake following dark to light transition. The chain is Proton extrusion protein PxcA from Prochlorococcus marinus (strain MIT 9303).